Consider the following 470-residue polypeptide: Cytochrome P450 monooxygenase sirC (470 aa).

A helical transmembrane segment spans residues 12-34 (LRGMVVGTIMLLCYRYGLALSIL). Residue N399 is glycosylated (N-linked (GlcNAc...) asparagine). C410 is a heme binding site.

The protein belongs to the cytochrome P450 family. Heme serves as cofactor.

It is found in the membrane. It participates in mycotoxin biosynthesis. Cytochrome P450 monooxygenase; part of the gene cluster that mediates the biosynthesis of sirodesmin PL, an epipolythiodioxopiperazine (ETP) characterized by a disulfide bridged cyclic dipeptide and that acts as a phytotoxin which is involved in the blackleg didease of canola. SirD catalyzes the O-prenylation of L-tyrosine (L-Tyr) in the presence of dimethylallyl diphosphate (DMAPP) to yield 4-O-dimethylallyl-L-Tyr, and therefore represents probably the first pathway-specific enzyme in the biosynthesis of sirodesmin PL. 4-O-dimethylallyl-L-Tyr, then undergoes condensation with L-Ser in a reaction catalyzed by the non-ribosomal peptide synthase sirP to form the diketopiperazine (DKP) backbone. Further bishydroxylation of the DKP performed by the cytochrome P450 monooxygenase sirC leads to the production of the intermediate phomamide. This step is essential to form the reactive thiol group required for toxicity of sirodesmin PL. The next steps of sirodesmin biosynthesis are not well understood yet, but some predictions could be made from intermediate compounds identification. Phomamide is converted into phomalizarine via oxidation, probably by sirT. Further oxidation, methylation (by sirM or sirN) and reduction steps convert phomalizarine to deacetyl sirodesmin. Finally, acetyltransferase sirH probably acetylates deacetyl sirodesmin to produce sirodesmin PL. The protein is Cytochrome P450 monooxygenase sirC of Leptosphaeria maculans (Blackleg fungus).